Here is a 961-residue protein sequence, read N- to C-terminus: Copper-exporting P-type ATPase (961 aa).

HMA domains are found at residues 3–64 and 69–130; these read QTTL…YQAT and PDVE…YHAT. C14, C17, C80, and C83 together coordinate Cu(+). Disordered regions lie at residues 131 to 153 and 178 to 201; these read QQGI…PESL and VLPT…TASA. The span at 142–151 shows a compositional bias: polar residues; sequence LTHSAQSQPE. In terms of domain architecture, HMA 3 spans 226–289; that stretch reads ESVQLLLTGM…AVKNAGYGAE (64 aa). Residues C237 and C240 each coordinate Cu(+). Helical transmembrane passes span 316 to 336, 345 to 365, 381 to 401, 565 to 585, and 592 to 612; these read AALG…GGSM, PWLI…GHFY, TLVA…NIWP, AVFV…WYFF, and VYTL…ALGL. Residue D650 is the 4-aspartylphosphate intermediate of the active site. Residues D847 and D851 each contribute to the Mg(2+) site. Transmembrane regions (helical) follow at residues 860 to 880, 906 to 926, and 928 to 948; these read VGIA…ITLM, LGAF…LYPF, and GTLL…ITVV.

The protein belongs to the cation transport ATPase (P-type) (TC 3.A.3) family. Type IB subfamily.

The protein localises to the cell membrane. It carries out the reaction Cu(+)(in) + ATP + H2O = Cu(+)(out) + ADP + phosphate + H(+). Its function is as follows. Involved in copper export. The protein is Copper-exporting P-type ATPase (copA) of Yersinia pestis.